The sequence spans 261 residues: MTHQTHACHMVNPSPWPLTGALSGLLMTSGLIMWFHFNSTTLLMLGLTTNMLTMYQWWRDVIRESTFQGHHTPNVQKGLRYGMILFIISEVLFFTGFFWAFYHSSLAPTPELGGCWPPTGIHPLNPLEVPLLNTSVLLASGVSITWAHHSLMEGNRNHMLQALFITIALGVYFTLLQASEYYEAPFTISDGVYGSTFFVATGFHGLHVIIGSTFLIVCFFRQLKFHFTSSHHFGFEAAAWYWHFVDVVWLFLYVSIYWWGS.

At 1 to 15 the chain is on the mitochondrial matrix side; that stretch reads MTHQTHACHMVNPSP. A helical membrane pass occupies residues 16–34; it reads WPLTGALSGLLMTSGLIMW. Residues 35–40 lie on the Mitochondrial intermembrane side of the membrane; it reads FHFNST. The chain crosses the membrane as a helical span at residues 41–66; it reads TLLMLGLTTNMLTMYQWWRDVIREST. Residues 67–72 lie on the Mitochondrial matrix side of the membrane; sequence FQGHHT. Residues 73–105 form a helical membrane-spanning segment; it reads PNVQKGLRYGMILFIISEVLFFTGFFWAFYHSS. The Mitochondrial intermembrane segment spans residues 106-128; that stretch reads LAPTPELGGCWPPTGIHPLNPLE. The helical transmembrane segment at 129–152 threads the bilayer; it reads VPLLNTSVLLASGVSITWAHHSLM. At 153–155 the chain is on the mitochondrial matrix side; that stretch reads EGN. A helical membrane pass occupies residues 156–183; that stretch reads RNHMLQALFITIALGVYFTLLQASEYYE. At 184–190 the chain is on the mitochondrial intermembrane side; that stretch reads APFTISD. Residues 191-223 traverse the membrane as a helical segment; it reads GVYGSTFFVATGFHGLHVIIGSTFLIVCFFRQL. Residues 224-232 lie on the Mitochondrial matrix side of the membrane; the sequence is KFHFTSSHH. A helical membrane pass occupies residues 233 to 256; that stretch reads FGFEAAAWYWHFVDVVWLFLYVSI. Residues 257–261 lie on the Mitochondrial intermembrane side of the membrane; it reads YWWGS.

It belongs to the cytochrome c oxidase subunit 3 family. Component of the cytochrome c oxidase (complex IV, CIV), a multisubunit enzyme composed of 14 subunits. The complex is composed of a catalytic core of 3 subunits MT-CO1, MT-CO2 and MT-CO3, encoded in the mitochondrial DNA, and 11 supernumerary subunits COX4I, COX5A, COX5B, COX6A, COX6B, COX6C, COX7A, COX7B, COX7C, COX8 and NDUFA4, which are encoded in the nuclear genome. The complex exists as a monomer or a dimer and forms supercomplexes (SCs) in the inner mitochondrial membrane with NADH-ubiquinone oxidoreductase (complex I, CI) and ubiquinol-cytochrome c oxidoreductase (cytochrome b-c1 complex, complex III, CIII), resulting in different assemblies (supercomplex SCI(1)III(2)IV(1) and megacomplex MCI(2)III(2)IV(2)).

The protein localises to the mitochondrion inner membrane. The enzyme catalyses 4 Fe(II)-[cytochrome c] + O2 + 8 H(+)(in) = 4 Fe(III)-[cytochrome c] + 2 H2O + 4 H(+)(out). Component of the cytochrome c oxidase, the last enzyme in the mitochondrial electron transport chain which drives oxidative phosphorylation. The respiratory chain contains 3 multisubunit complexes succinate dehydrogenase (complex II, CII), ubiquinol-cytochrome c oxidoreductase (cytochrome b-c1 complex, complex III, CIII) and cytochrome c oxidase (complex IV, CIV), that cooperate to transfer electrons derived from NADH and succinate to molecular oxygen, creating an electrochemical gradient over the inner membrane that drives transmembrane transport and the ATP synthase. Cytochrome c oxidase is the component of the respiratory chain that catalyzes the reduction of oxygen to water. Electrons originating from reduced cytochrome c in the intermembrane space (IMS) are transferred via the dinuclear copper A center (CU(A)) of subunit 2 and heme A of subunit 1 to the active site in subunit 1, a binuclear center (BNC) formed by heme A3 and copper B (CU(B)). The BNC reduces molecular oxygen to 2 water molecules using 4 electrons from cytochrome c in the IMS and 4 protons from the mitochondrial matrix. This Gazella saudiya (Saudi gazelle) protein is Cytochrome c oxidase subunit 3 (MT-CO3).